A 675-amino-acid polypeptide reads, in one-letter code: MASERLHLILLVFFNHLTFLLSQQEEAGFIYNGFGQAQAGLHLDGAAKILFPDGLLQLTNASTQQMGHAFFKKPFKFDSYEKKLSFSTHFVCALVPKPGADGGHGIAFVVSSSIDFTQADPTQYLGLLNISTNGSPSSQLLAIELDTVESAEFDDIDKNHVGIDIKSLNSVESASASYFSNAKGKNQSIKLLSGDPIQIWVDYEGALLNVTVAPLSIQKPNHPLLSRSINLTDIFPDRKLFFGFSAATGTLVSYQYILGWSFSRSRMLLQSLDFSKLPQIPHPKAKQEQTSPLLIVLLMLLVLIMLAVLGGIYLYRRKKYAEVREVWEKEYSPHRFSYKSLYKATNRFDKDGRLGKGGFGEVYRGNLPHVGDIAVKRVCHDAKQGMKQFVAEVVTMGSLKHRNLVPLLGYCRRKGELLLVSEYMSNGSLDQYLFHREKPALSWSQRLVILKDIASALSYLHTGANQVVLHRDIKASNVMLDSEFNGRLGDFGMARFEDYGDSVPVTAAVGTMGYMAPELTTMGTSTRTDVYAFGVLMLEVTCGRRPLDPKIPSEKRHLIKWVCDCWRRDSIVDAIDTRLGGQYSVEETVMVLKLGLICTNIVAESRPTMEQVIQYINQNLPLPNFSPGSLGIGVSTPVLLESVFNSRSSLAPSISPPSSHNSMFVTHTITYGDGR.

A signal peptide spans Met-1–Ser-22. Residues Gln-23–Pro-292 are Extracellular-facing. The tract at residues Ala-27–Ser-263 is legume-lectin like. N-linked (GlcNAc...) asparagine glycosylation is found at Asn-60, Asn-129, Asn-186, Asn-209, and Asn-230. The helical transmembrane segment at Leu-293 to Tyr-313 threads the bilayer. At Leu-314 to Arg-675 the chain is on the cytoplasmic side. The region spanning Phe-348–Leu-620 is the Protein kinase domain. ATP-binding positions include Leu-354 to Val-362 and Lys-376. The active-site Proton acceptor is the Asp-472.

This sequence in the C-terminal section; belongs to the protein kinase superfamily. Ser/Thr protein kinase family. The protein in the N-terminal section; belongs to the leguminous lectin family.

It is found in the cell membrane. It catalyses the reaction L-seryl-[protein] + ATP = O-phospho-L-seryl-[protein] + ADP + H(+). It carries out the reaction L-threonyl-[protein] + ATP = O-phospho-L-threonyl-[protein] + ADP + H(+). The polypeptide is Putative L-type lectin-domain containing receptor kinase I.11 (LECRK111) (Arabidopsis thaliana (Mouse-ear cress)).